We begin with the raw amino-acid sequence, 155 residues long: S-ribosylhomocysteine lyase (155 aa).

Positions 57, 61, and 124 each coordinate Fe cation.

This sequence belongs to the LuxS family. In terms of assembly, homodimer. Fe cation is required as a cofactor.

The enzyme catalyses S-(5-deoxy-D-ribos-5-yl)-L-homocysteine = (S)-4,5-dihydroxypentane-2,3-dione + L-homocysteine. In terms of biological role, involved in the synthesis of autoinducer 2 (AI-2) which is secreted by bacteria and is used to communicate both the cell density and the metabolic potential of the environment. The regulation of gene expression in response to changes in cell density is called quorum sensing. Catalyzes the transformation of S-ribosylhomocysteine (RHC) to homocysteine (HC) and 4,5-dihydroxy-2,3-pentadione (DPD). The polypeptide is S-ribosylhomocysteine lyase (Listeria monocytogenes serotype 4b (strain CLIP80459)).